We begin with the raw amino-acid sequence, 579 residues long: 3-hydroxy-3-methylglutaryl-coenzyme A reductase (579 aa).

The segment at M1 to S22 is disordered. The next 2 membrane-spanning stretches (helical) occupy residues L36 to L56 and A80 to V100. The interval Q101–D153 is linker. The catalytic stretch occupies residues D154–V579. E247 functions as the Charge relay system in the catalytic mechanism. N311 carries N-linked (GlcNAc...) asparagine glycosylation. Catalysis depends on charge relay system residues K379 and D455. The helical transmembrane segment at L524–L544 threads the bilayer. H553 functions as the Proton donor in the catalytic mechanism. The tract at residues K555–V579 is disordered. N557 carries an N-linked (GlcNAc...) asparagine glycan. The span at E570 to V579 shows a compositional bias: basic and acidic residues.

The protein belongs to the HMG-CoA reductase family.

Its subcellular location is the endoplasmic reticulum membrane. It catalyses the reaction (R)-mevalonate + 2 NADP(+) + CoA = (3S)-3-hydroxy-3-methylglutaryl-CoA + 2 NADPH + 2 H(+). It functions in the pathway metabolic intermediate biosynthesis; (R)-mevalonate biosynthesis; (R)-mevalonate from acetyl-CoA: step 3/3. Catalyzes the synthesis of mevalonate. The specific precursor of all isoprenoid compounds present in plants. The sequence is that of 3-hydroxy-3-methylglutaryl-coenzyme A reductase (HMGR) from Zea mays (Maize).